Here is a 556-residue protein sequence, read N- to C-terminus: Formate--tetrahydrofolate ligase (556 aa).

ATP is bound at residue 65–72 (TPAGEGKS).

This sequence belongs to the formate--tetrahydrofolate ligase family.

It catalyses the reaction (6S)-5,6,7,8-tetrahydrofolate + formate + ATP = (6R)-10-formyltetrahydrofolate + ADP + phosphate. Its pathway is one-carbon metabolism; tetrahydrofolate interconversion. The sequence is that of Formate--tetrahydrofolate ligase from Streptococcus pneumoniae (strain Hungary19A-6).